A 692-amino-acid polypeptide reads, in one-letter code: Elongation factor G (692 aa).

Residues 8 to 283 enclose the tr-type G domain; it reads DRYRNIGIMA…AVVDFLPSPL (276 aa). GTP contacts are provided by residues 17–24, 81–85, and 135–138; these read AHIDAGKT, DTPGH, and NKMD.

Belongs to the TRAFAC class translation factor GTPase superfamily. Classic translation factor GTPase family. EF-G/EF-2 subfamily.

The protein localises to the cytoplasm. Functionally, catalyzes the GTP-dependent ribosomal translocation step during translation elongation. During this step, the ribosome changes from the pre-translocational (PRE) to the post-translocational (POST) state as the newly formed A-site-bound peptidyl-tRNA and P-site-bound deacylated tRNA move to the P and E sites, respectively. Catalyzes the coordinated movement of the two tRNA molecules, the mRNA and conformational changes in the ribosome. The sequence is that of Elongation factor G from Rhodospirillum rubrum (strain ATCC 11170 / ATH 1.1.1 / DSM 467 / LMG 4362 / NCIMB 8255 / S1).